Here is a 181-residue protein sequence, read N- to C-terminus: Acireductone dioxygenase (181 aa).

His-98, His-100, Glu-104, and His-142 together coordinate Fe(2+). 4 residues coordinate Ni(2+): His-98, His-100, Glu-104, and His-142.

This sequence belongs to the acireductone dioxygenase (ARD) family. As to quaternary structure, monomer. Fe(2+) serves as cofactor. The cofactor is Ni(2+).

The catalysed reaction is 1,2-dihydroxy-5-(methylsulfanyl)pent-1-en-3-one + O2 = 3-(methylsulfanyl)propanoate + CO + formate + 2 H(+). The enzyme catalyses 1,2-dihydroxy-5-(methylsulfanyl)pent-1-en-3-one + O2 = 4-methylsulfanyl-2-oxobutanoate + formate + 2 H(+). It functions in the pathway amino-acid biosynthesis; L-methionine biosynthesis via salvage pathway; L-methionine from S-methyl-5-thio-alpha-D-ribose 1-phosphate: step 5/6. Functionally, catalyzes 2 different reactions between oxygen and the acireductone 1,2-dihydroxy-3-keto-5-methylthiopentene (DHK-MTPene) depending upon the metal bound in the active site. Fe-containing acireductone dioxygenase (Fe-ARD) produces formate and 2-keto-4-methylthiobutyrate (KMTB), the alpha-ketoacid precursor of methionine in the methionine recycle pathway. Ni-containing acireductone dioxygenase (Ni-ARD) produces methylthiopropionate, carbon monoxide and formate, and does not lie on the methionine recycle pathway. The sequence is that of Acireductone dioxygenase from Alcanivorax borkumensis (strain ATCC 700651 / DSM 11573 / NCIMB 13689 / SK2).